Here is a 138-residue protein sequence, read N- to C-terminus: Putative pre-16S rRNA nuclease (138 aa).

Belongs to the YqgF nuclease family.

It is found in the cytoplasm. In terms of biological role, could be a nuclease involved in processing of the 5'-end of pre-16S rRNA. The polypeptide is Putative pre-16S rRNA nuclease (Porphyromonas gingivalis (strain ATCC BAA-308 / W83)).